We begin with the raw amino-acid sequence, 153 residues long: Large ribosomal subunit protein uL30 (153 aa).

This sequence belongs to the universal ribosomal protein uL30 family. In terms of assembly, part of the 50S ribosomal subunit.

This Methanocella arvoryzae (strain DSM 22066 / NBRC 105507 / MRE50) protein is Large ribosomal subunit protein uL30.